A 194-amino-acid polypeptide reads, in one-letter code: Phosphoheptose isomerase (194 aa).

The 158-residue stretch at I37–A194 folds into the SIS domain. N52–G54 is a substrate binding site. Positions 61 and 65 each coordinate Zn(2+). Residues E65, N93 to D94, S119 to S121, S124, and Q172 contribute to the substrate site. Zn(2+) is bound by residues Q172 and H180.

Belongs to the SIS family. GmhA subfamily. As to quaternary structure, homotetramer. Zn(2+) is required as a cofactor.

Its subcellular location is the cytoplasm. It catalyses the reaction 2 D-sedoheptulose 7-phosphate = D-glycero-alpha-D-manno-heptose 7-phosphate + D-glycero-beta-D-manno-heptose 7-phosphate. It participates in carbohydrate biosynthesis; D-glycero-D-manno-heptose 7-phosphate biosynthesis; D-glycero-alpha-D-manno-heptose 7-phosphate and D-glycero-beta-D-manno-heptose 7-phosphate from sedoheptulose 7-phosphate: step 1/1. Catalyzes the isomerization of sedoheptulose 7-phosphate in D-glycero-D-manno-heptose 7-phosphate. The polypeptide is Phosphoheptose isomerase (Haemophilus influenzae (strain 86-028NP)).